The sequence spans 1062 residues: Carbamoyl phosphate synthase large chain (1062 aa).

Positions 1–401 are carboxyphosphate synthetic domain; the sequence is MPKRTDIHKI…AMQKAVRSLE (401 aa). The ATP site is built by Arg129, Arg169, Gly175, Gly176, Lys208, Ile210, Glu215, Gly241, Ile242, His243, Gln284, and Glu298. The 195-residue stretch at 133–327 folds into the ATP-grasp 1 domain; that stretch reads KELCKELGEP…IAKMAAKIAI (195 aa). 3 residues coordinate Mg(2+): Gln284, Glu298, and Asn300. Residues Gln284, Glu298, and Asn300 each coordinate Mn(2+). An oligomerization domain region spans residues 402–546; sequence IDEKDLYSET…YSTYDGENES (145 aa). The interval 547 to 929 is carbamoyl phosphate synthetic domain; the sequence is HKSGKKSVIV…ALYKAFAGAK (383 aa). The ATP-grasp 2 domain occupies 671–861; the sequence is DQIIKKLKLN…MAQVATRVIM (191 aa). Positions 707, 746, 748, 752, 777, 778, 779, 780, 820, and 832 each coordinate ATP. Mg(2+) contacts are provided by Gln820, Glu832, and Asn834. Residues Gln820, Glu832, and Asn834 each contribute to the Mn(2+) site. Positions 930–1062 constitute an MGS-like domain; that stretch reads MQLPENGNVL…NRSFATDALK (133 aa). Positions 930-1062 are allosteric domain; the sequence is MQLPENGNVL…NRSFATDALK (133 aa).

This sequence belongs to the CarB family. Composed of two chains; the small (or glutamine) chain promotes the hydrolysis of glutamine to ammonia, which is used by the large (or ammonia) chain to synthesize carbamoyl phosphate. Tetramer of heterodimers (alpha,beta)4. It depends on Mg(2+) as a cofactor. The cofactor is Mn(2+).

It catalyses the reaction hydrogencarbonate + L-glutamine + 2 ATP + H2O = carbamoyl phosphate + L-glutamate + 2 ADP + phosphate + 2 H(+). The enzyme catalyses hydrogencarbonate + NH4(+) + 2 ATP = carbamoyl phosphate + 2 ADP + phosphate + 2 H(+). It participates in amino-acid biosynthesis; L-arginine biosynthesis; carbamoyl phosphate from bicarbonate: step 1/1. It functions in the pathway pyrimidine metabolism; UMP biosynthesis via de novo pathway; (S)-dihydroorotate from bicarbonate: step 1/3. In terms of biological role, large subunit of the glutamine-dependent carbamoyl phosphate synthetase (CPSase). CPSase catalyzes the formation of carbamoyl phosphate from the ammonia moiety of glutamine, carbonate, and phosphate donated by ATP, constituting the first step of 2 biosynthetic pathways, one leading to arginine and/or urea and the other to pyrimidine nucleotides. The large subunit (synthetase) binds the substrates ammonia (free or transferred from glutamine from the small subunit), hydrogencarbonate and ATP and carries out an ATP-coupled ligase reaction, activating hydrogencarbonate by forming carboxy phosphate which reacts with ammonia to form carbamoyl phosphate. This is Carbamoyl phosphate synthase large chain from Lactobacillus johnsonii (strain CNCM I-12250 / La1 / NCC 533).